A 332-amino-acid polypeptide reads, in one-letter code: Leucine carboxyl methyltransferase 1 homolog (332 aa).

S-adenosyl-L-methionine-binding positions include Lys22, Arg57, Gly83, Asp107, Asp153–Leu154, and Glu180.

The protein belongs to the methyltransferase superfamily. LCMT family.

It is found in the cytoplasm. It localises to the membrane. It carries out the reaction [phosphatase 2A protein]-C-terminal L-leucine + S-adenosyl-L-methionine = [phosphatase 2A protein]-C-terminal L-leucine methyl ester + S-adenosyl-L-homocysteine. In terms of biological role, methylates the carboxyl group of the C-terminal leucine residue of protein phosphatase 2A (PP2A) catalytic subunits to form alpha-leucine ester residues. Involved in brassinosteroid (BR) signaling. Plays a negative role in BR signaling pathway. Functions as a positive regulator of BRI1 receptor-kinase degradation. Methylates PP2A, thus facilitating its association with activated BRI1. This leads to receptor dephosphorylation and degradation, and thus to the termination of BR signaling. May act upstream of ASK7/BIN2. Involved in methylation of PP2A during environmental stress responses. This chain is Leucine carboxyl methyltransferase 1 homolog, found in Arabidopsis thaliana (Mouse-ear cress).